The following is a 469-amino-acid chain: UDP-N-acetylmuramate--L-alanine ligase (469 aa).

114-120 (GTHGKTT) provides a ligand contact to ATP.

This sequence belongs to the MurCDEF family.

It localises to the cytoplasm. The enzyme catalyses UDP-N-acetyl-alpha-D-muramate + L-alanine + ATP = UDP-N-acetyl-alpha-D-muramoyl-L-alanine + ADP + phosphate + H(+). It functions in the pathway cell wall biogenesis; peptidoglycan biosynthesis. Its function is as follows. Cell wall formation. The chain is UDP-N-acetylmuramate--L-alanine ligase from Sinorhizobium fredii (strain NBRC 101917 / NGR234).